The chain runs to 225 residues: Phosphoribosylformylglycinamidine synthase subunit PurQ (225 aa).

Positions 5 to 225 (SAVITFPGSN…ESVVRGLVEA (221 aa)) constitute a Glutamine amidotransferase type-1 domain. Cys89 serves as the catalytic Nucleophile. Residues His197 and Glu199 contribute to the active site.

Part of the FGAM synthase complex composed of 1 PurL, 1 PurQ and 2 PurS subunits.

The protein resides in the cytoplasm. It carries out the reaction N(2)-formyl-N(1)-(5-phospho-beta-D-ribosyl)glycinamide + L-glutamine + ATP + H2O = 2-formamido-N(1)-(5-O-phospho-beta-D-ribosyl)acetamidine + L-glutamate + ADP + phosphate + H(+). It catalyses the reaction L-glutamine + H2O = L-glutamate + NH4(+). It functions in the pathway purine metabolism; IMP biosynthesis via de novo pathway; 5-amino-1-(5-phospho-D-ribosyl)imidazole from N(2)-formyl-N(1)-(5-phospho-D-ribosyl)glycinamide: step 1/2. Functionally, part of the phosphoribosylformylglycinamidine synthase complex involved in the purines biosynthetic pathway. Catalyzes the ATP-dependent conversion of formylglycinamide ribonucleotide (FGAR) and glutamine to yield formylglycinamidine ribonucleotide (FGAM) and glutamate. The FGAM synthase complex is composed of three subunits. PurQ produces an ammonia molecule by converting glutamine to glutamate. PurL transfers the ammonia molecule to FGAR to form FGAM in an ATP-dependent manner. PurS interacts with PurQ and PurL and is thought to assist in the transfer of the ammonia molecule from PurQ to PurL. The chain is Phosphoribosylformylglycinamidine synthase subunit PurQ from Novosphingobium aromaticivorans (strain ATCC 700278 / DSM 12444 / CCUG 56034 / CIP 105152 / NBRC 16084 / F199).